A 416-amino-acid chain; its full sequence is Glutamyl-tRNA reductase (416 aa).

Substrate-binding positions include 51–54 (TCNR), S110, 115–117 (EPQ), and Q121. C52 serves as the catalytic Nucleophile. An NADP(+)-binding site is contributed by 190-195 (GAGQTG).

It belongs to the glutamyl-tRNA reductase family. In terms of assembly, homodimer.

The catalysed reaction is (S)-4-amino-5-oxopentanoate + tRNA(Glu) + NADP(+) = L-glutamyl-tRNA(Glu) + NADPH + H(+). Its pathway is porphyrin-containing compound metabolism; protoporphyrin-IX biosynthesis; 5-aminolevulinate from L-glutamyl-tRNA(Glu): step 1/2. Functionally, catalyzes the NADPH-dependent reduction of glutamyl-tRNA(Glu) to glutamate 1-semialdehyde (GSA). This is Glutamyl-tRNA reductase from Francisella tularensis subsp. holarctica (strain OSU18).